The sequence spans 458 residues: F-box/LRR-repeat protein At5g02910 (458 aa).

The F-box domain maps to 10–56; the sequence is MDFISSLPDEILHHILSSVPTKSAIRTSLLSKRWRYVWSETPSLSID. LRR repeat units lie at residues 57–84, 86–112, 133–161, 162–187, 226–251, 260–285, 325–353, and 389–414; these read CRRA…HLHT, LLNR…SLES, KQLF…LSLS, NCTL…ELLY, CLRL…DLNI, TAGF…TIGG, KLLR…HLND, and ESNL…VVLL.

The polypeptide is F-box/LRR-repeat protein At5g02910 (Arabidopsis thaliana (Mouse-ear cress)).